The primary structure comprises 280 residues: Diaminopimelate epimerase (280 aa).

Substrate-binding residues include asparagine 12, glutamine 45, and asparagine 65. Cysteine 74 acts as the Proton donor in catalysis. Residues 75-76 (GN), asparagine 163, asparagine 196, and 214-215 (ER) each bind substrate. Residue cysteine 223 is the Proton acceptor of the active site. A substrate-binding site is contributed by 224–225 (GT).

The protein belongs to the diaminopimelate epimerase family. In terms of assembly, homodimer.

It localises to the cytoplasm. It catalyses the reaction (2S,6S)-2,6-diaminopimelate = meso-2,6-diaminopimelate. The protein operates within amino-acid biosynthesis; L-lysine biosynthesis via DAP pathway; DL-2,6-diaminopimelate from LL-2,6-diaminopimelate: step 1/1. Its function is as follows. Catalyzes the stereoinversion of LL-2,6-diaminopimelate (L,L-DAP) to meso-diaminopimelate (meso-DAP), a precursor of L-lysine and an essential component of the bacterial peptidoglycan. This Shewanella sediminis (strain HAW-EB3) protein is Diaminopimelate epimerase.